The chain runs to 877 residues: MPAWPRFMSLRRQYLYKALDKNHQKHPIKHPHTRFLSRLFCALAVLFSYSIYQSFRTDLKQSGSWGCEMSWMSPSYRRLEWTEFISTRYALYLYREQGLDSEDTLSGHPVLFVPGNAGSYQQVRSIASSASKQYYEQVKARERNVVTGKKIDFFTADLKEEFSAFHARTVREQAVFIQHCIKGILQEYTHLPQEKRPTQVTLLAHSMGGVVARLAMDPITSISVDIIVTLSTPHILPPLALERDMDSIYSLIRWRRQHISTHPPLISICGGISDTQIVSDSCALPFFQAGNNSDIAVFTTGIPGVWTAVEHQAIIWCHQIRWRIARMLLDMSSRANTTAKLVTAKEWLLDYQEDETLKEPRSERQHDYSVSSRNMTFIGLHQPSKAFVAQQCNGLERCRTVPSVMSLLPFPNNPSDPFPLPGEGIKPSEVMLVAEISLSSTNTVVKINASQYGQTIAGSREHHLVKGNSWKVNSSLPSLTTHHLFHFENAFLSSLVTHSLDITLGHCKDFKPLIKHISQPALELQSATFESNYYFASGRPIHLHSHSTAGPFLPYQDRAGIYLEIFQSPLCPVQQVSLRKNYYNVLAKSVTRYRMVVLAWPVGWATVVLLFQLSDFINTGEILPWNSALERIARRRMPICIVLLLLGATIQSQLPDFPMLHTFFLGVNQLEMVPLVGILGVWTFGLLCVVSFVITACLWLLGCIIQQPHGHERLEDETKSKHDWLGVVMIGAAAVLVNQVIPHQLIFLLCVILLWLSAARSKALNDRYHLISTCAIFTTLLIPFKILHVAIWSRNIWTGSAALVSTDNNFYYAIPPVLLVKCASCGGTIQKRHVCLKACRIALIILIMSSFSVGARWTWILSPIANAVLILFVASII.

A helical transmembrane segment spans residues 35–55 (FLSRLFCALAVLFSYSIYQSF). Residue Ser-206 is part of the active site. N-linked (GlcNAc...) asparagine glycosylation is found at Asn-291, Asn-336, Asn-374, Asn-448, and Asn-473. A run of 8 helical transmembrane segments spans residues 597 to 617 (VLAWPVGWATVVLLFQLSDFI), 637 to 657 (MPICIVLLLLGATIQSQLPDF), 674 to 694 (PLVGILGVWTFGLLCVVSFVI), 735 to 755 (VLVNQVIPHQLIFLLCVILLW), 771 to 791 (ISTCAIFTTLLIPFKILHVAI), 809 to 829 (NFYYAIPPVLLVKCASCGGTI), 834 to 854 (VCLKACRIALIILIMSSFSVG), and 857 to 877 (WTWILSPIANAVLILFVASII).

Belongs to the GPI inositol-deacylase family.

The protein resides in the endoplasmic reticulum membrane. In terms of biological role, involved in inositol deacylation of GPI-anchored proteins which plays important roles in the quality control and ER-associated degradation of GPI-anchored proteins. The protein is GPI inositol-deacylase (BST1) of Cryptococcus neoformans var. neoformans serotype D (strain JEC21 / ATCC MYA-565) (Filobasidiella neoformans).